We begin with the raw amino-acid sequence, 273 residues long: Glutamate 5-kinase (273 aa).

Lysine 15 provides a ligand contact to ATP. Substrate-binding residues include serine 55, aspartate 142, and asparagine 158. ATP-binding positions include 178-179 (SD) and 220-226 (TGGMLSK).

It belongs to the glutamate 5-kinase family.

The protein resides in the cytoplasm. The enzyme catalyses L-glutamate + ATP = L-glutamyl 5-phosphate + ADP. The protein operates within amino-acid biosynthesis; L-proline biosynthesis; L-glutamate 5-semialdehyde from L-glutamate: step 1/2. Functionally, catalyzes the transfer of a phosphate group to glutamate to form L-glutamate 5-phosphate. This Streptococcus pyogenes serotype M1 protein is Glutamate 5-kinase.